The chain runs to 126 residues: Histone H2B-alpha (126 aa).

Residues 1-34 are disordered; it reads MSAAEKKPASKAPAGKAPRDTMKSADKKRGKNRK. N6-acetyllysine; alternate occurs at positions 6 and 7. Glycyl lysine isopeptide (Lys-Gly) (interchain with G-Cter in SUMO); alternate cross-links involve residues Lys6 and Lys7. At Ser10 the chain carries Phosphoserine. Position 11 is an N6-acetyllysine (Lys11). A compositionally biased stretch (basic and acidic residues) spans 17–27; it reads APRDTMKSADK. Lys120 participates in a covalent cross-link: Glycyl lysine isopeptide (Lys-Gly) (interchain with G-Cter in ubiquitin).

Belongs to the histone H2B family. In terms of assembly, the nucleosome is a histone octamer containing two molecules each of H2A, H2B, H3 and H4 assembled in one H3-H4 heterotetramer and two H2A-H2B heterodimers. The octamer wraps approximately 147 bp of DNA. Interacts with rik1. In terms of processing, monoubiquitinated by the rhp6/ubc2-bre1 complex to form H2BK123ub1. H2BK123ub1 gives a specific tag for epigenetic transcriptional activation and is also prerequisite for H3K4me and H3K79me formation. H2BK123ub1 also modulates the formation of double-strand breaks during meiosis and is a prerequisite for DNA-damage checkpoint activation. Phosphorylated by shk1 to form H2BS10ph during progression through meiotic prophase. May be correlated with chromosome condensation. Post-translationally, acetylation of N-terminal lysines and particularly formation of H2BK11ac has a positive effect on transcription. In terms of processing, sumoylation to form H2BK6su or H2BK7su occurs preferentially near the telomeres and represses gene transcription.

Its subcellular location is the nucleus. It localises to the chromosome. Core component of nucleosome. Nucleosomes wrap and compact DNA into chromatin, limiting DNA accessibility to the cellular machineries which require DNA as a template. Histones thereby play a central role in transcription regulation, DNA repair, DNA replication and chromosomal stability. DNA accessibility is regulated via a complex set of post-translational modifications of histones, also called histone code, and nucleosome remodeling. In Schizosaccharomyces pombe (strain 972 / ATCC 24843) (Fission yeast), this protein is Histone H2B-alpha (htb1).